We begin with the raw amino-acid sequence, 92 residues long: Ribonuclease P protein component 1 (92 aa).

The protein belongs to the eukaryotic/archaeal RNase P protein component 1 family. As to quaternary structure, consists of a catalytic RNA component and at least 4-5 protein subunits.

Its subcellular location is the cytoplasm. It carries out the reaction Endonucleolytic cleavage of RNA, removing 5'-extranucleotides from tRNA precursor.. Part of ribonuclease P, a protein complex that generates mature tRNA molecules by cleaving their 5'-ends. The chain is Ribonuclease P protein component 1 from Desulfurococcus amylolyticus (strain DSM 18924 / JCM 16383 / VKM B-2413 / 1221n) (Desulfurococcus kamchatkensis).